The sequence spans 207 residues: Guanylate kinase (207 aa).

Residues 5-184 form the Guanylate kinase-like domain; sequence GNLFIVSAPS…ALADLVAIIR (180 aa). 12–19 contacts ATP; that stretch reads APSGAGKS.

The protein belongs to the guanylate kinase family.

It is found in the cytoplasm. The enzyme catalyses GMP + ATP = GDP + ADP. Essential for recycling GMP and indirectly, cGMP. This is Guanylate kinase from Shewanella violacea (strain JCM 10179 / CIP 106290 / LMG 19151 / DSS12).